The sequence spans 417 residues: Neuropeptide FF receptor 2 (417 aa).

Residues 1 to 45 (MGKRWDSNSSGSWDHIWSGNDTQHPWYSDINITYMNYYLHQPHVT) lie on the Extracellular side of the membrane. Residues Asn8, Asn20, and Asn31 are each glycosylated (N-linked (GlcNAc...) asparagine). Residues 46 to 66 (AVFISSYFLIFFLCMVGNTVV) form a helical membrane-spanning segment. The Cytoplasmic segment spans residues 67–82 (CFVVIRNRYMHTVTNF). The helical transmembrane segment at 83 to 103 (FIFNLAISDLLVGIFCMPITL) threads the bilayer. Over 104 to 119 (LDNIIAGWPFGSSMCK) the chain is Extracellular. A disulfide bridge links Cys118 with Cys206. Residues 120-140 (ISGLVQGISVAASVFTLVAIA) traverse the membrane as a helical segment. The Cytoplasmic portion of the chain corresponds to 141–160 (VDRFRCVVYPFKPKLTVKTA). The chain crosses the membrane as a helical span at residues 161–181 (FVMIVIIWGLAITIMTPSAIM). The Extracellular portion of the chain corresponds to 182–217 (LHVQEEKYYRVRLSSHNKTSTVYWCREDWPNQEMRR). Asn198 carries N-linked (GlcNAc...) asparagine glycosylation. The helical transmembrane segment at 218–238 (IYTTVLFATIYLAPLSLIVIM) threads the bilayer. Topologically, residues 239-274 (YARIGASLFKTSAHSTGKQRLEQWHVSKKKQKVIKM) are cytoplasmic. A helical membrane pass occupies residues 275 to 295 (LLTVALLFILSWLPLWTLMML). The Extracellular portion of the chain corresponds to 296-310 (SDYADLSPNKLRVIN). The helical transmembrane segment at 311 to 331 (IYVYPFAHWLAFCNSSVNPII) threads the bilayer. Over 332–417 (YGFFNENFRS…TGEATNSTET (86 aa)) the chain is Cytoplasmic. The segment at 378 to 417 (HEPASQNPSGENLGCRKSADNPTQESLMEETGEATNSTET) is disordered.

This sequence belongs to the G-protein coupled receptor 1 family.

Its subcellular location is the cell membrane. Receptor for NPAF (A-18-F-amide) and NPFF (F-8-F-amide) neuropeptides, also known as morphine-modulating peptides. Can also be activated by a variety of naturally occurring or synthetic FMRF-amide like ligands. This receptor mediates its action by association with G proteins that activate a phosphatidylinositol-calcium second messenger system. This Rattus norvegicus (Rat) protein is Neuropeptide FF receptor 2 (Npffr2).